Reading from the N-terminus, the 160-residue chain is Ureidoglycolate lyase (160 aa).

This sequence belongs to the ureidoglycolate lyase family. As to quaternary structure, homodimer. The cofactor is Ni(2+).

It catalyses the reaction (S)-ureidoglycolate = urea + glyoxylate. It participates in nitrogen metabolism; (S)-allantoin degradation. In terms of biological role, catalyzes the catabolism of the allantoin degradation intermediate (S)-ureidoglycolate, generating urea and glyoxylate. Involved in the anaerobic utilization of allantoin as sole nitrogen source. Reinforces the induction of genes involved in the degradation of allantoin and glyoxylate by producing glyoxylate. The protein is Ureidoglycolate lyase of Escherichia coli O139:H28 (strain E24377A / ETEC).